The chain runs to 158 residues: Transcription elongation factor GreB (158 aa).

The protein belongs to the GreA/GreB family. GreB subfamily.

Functionally, necessary for efficient RNA polymerase transcription elongation past template-encoded arresting sites. The arresting sites in DNA have the property of trapping a certain fraction of elongating RNA polymerases that pass through, resulting in locked ternary complexes. Cleavage of the nascent transcript by cleavage factors such as GreA or GreB allows the resumption of elongation from the new 3'terminus. GreB releases sequences of up to 9 nucleotides in length. The sequence is that of Transcription elongation factor GreB from Escherichia coli (strain K12).